The chain runs to 51 residues: Large ribosomal subunit protein eL39 (51 aa).

This sequence belongs to the eukaryotic ribosomal protein eL39 family.

This chain is Large ribosomal subunit protein eL39 (rpl39e), found in Aeropyrum pernix (strain ATCC 700893 / DSM 11879 / JCM 9820 / NBRC 100138 / K1).